The primary structure comprises 546 residues: Peptidoglycan transport ATP-binding protein YejF (546 aa).

2 ABC transporter domains span residues V12 to L261 and I291 to L530. Residues G46 to S53 and G323 to T330 contribute to the ATP site.

It belongs to the ABC transporter superfamily. In terms of assembly, the complex is composed of one ATP-binding protein (YejF), two transmembrane proteins (YejB and YejE) and a solute-binding protein (YepA or YejA).

It localises to the cell inner membrane. Part of the ABC transporter complex YejBEF-YepA involved in the uptake of muropeptides, the breakdown products of cell wall peptidoglycan. The import of muropeptides into the cell enables peptidoglycan recycling, which is vital for cell wall integrity in this bacterium. Is also probably part of the ABC transporter complex YejABEF, which is likely involved in broad-spectrum peptide import. Responsible for energy coupling to the transport system. The polypeptide is Peptidoglycan transport ATP-binding protein YejF (Agrobacterium fabrum (strain C58 / ATCC 33970) (Agrobacterium tumefaciens (strain C58))).